Here is a 559-residue protein sequence, read N- to C-terminus: Aminopeptidase Q (559 aa).

Residues 1–13 (MSRPFSSGVYVSR) are Cytoplasmic-facing. A helical; Signal-anchor for type II membrane protein transmembrane segment spans residues 14-34 (GVALLLAALTAVLLLVLVALA). Topologically, residues 35–559 (SLYGSCAHVQ…VPFRHFLAEH (525 aa)) are lumenal. Residues N121 and N129 are each glycosylated (N-linked (GlcNAc...) asparagine). E237 is a binding site for substrate. N258, N285, and N343 each carry an N-linked (GlcNAc...) asparagine glycan. Residue 376–380 (GAMEN) participates in substrate binding. Zn(2+) is bound at residue H412. The active-site Proton acceptor is E413. Residues H416 and E435 each contribute to the Zn(2+) site.

The protein belongs to the peptidase M1 family. As to quaternary structure, homodimer. It depends on Zn(2+) as a cofactor. N-glycosylated.

The protein resides in the membrane. Its activity is regulated as follows. Inhibited by bestatin. Its function is as follows. Metalloprotease which may be important for placentation by regulating biological activity of key peptides at the embryo-maternal interface. On synthetic substrates it shows a marked preference for Leu-4-methylcoumaryl-7-amide (Leu-MCA) over Met-MCA, Arg-LCA and Lys-LCA. Cleaves the N-terminal amino acid of several peptides such as angiotensin-3, kisspeptin-10 and endokinin C. In Mus musculus (Mouse), this protein is Aminopeptidase Q.